The primary structure comprises 152 residues: Large ribosomal subunit protein uL11 (152 aa).

This sequence belongs to the universal ribosomal protein uL11 family. In terms of assembly, part of the ribosomal stalk of the 50S ribosomal subunit. Interacts with L10 and the large rRNA to form the base of the stalk. L10 forms an elongated spine to which L12 dimers bind in a sequential fashion forming a multimeric L10(L12)X complex. In terms of processing, one or more lysine residues are methylated.

In terms of biological role, forms part of the ribosomal stalk which helps the ribosome interact with GTP-bound translation factors. This Mycoplasmoides gallisepticum (strain R(low / passage 15 / clone 2)) (Mycoplasma gallisepticum) protein is Large ribosomal subunit protein uL11.